The primary structure comprises 487 residues: Kynureninase 1 (487 aa).

Pyridoxal 5'-phosphate-binding positions include Leu147, Thr148, 175-178, Ser232, Asp261, His264, and Tyr286; that span reads FPSD. Lys287 is modified (N6-(pyridoxal phosphate)lysine). Residues Trp327 and Asn355 each contribute to the pyridoxal 5'-phosphate site.

The protein belongs to the kynureninase family. In terms of assembly, homodimer. Pyridoxal 5'-phosphate is required as a cofactor.

The protein resides in the cytoplasm. The enzyme catalyses L-kynurenine + H2O = anthranilate + L-alanine + H(+). It carries out the reaction 3-hydroxy-L-kynurenine + H2O = 3-hydroxyanthranilate + L-alanine + H(+). Its pathway is amino-acid degradation; L-kynurenine degradation; L-alanine and anthranilate from L-kynurenine: step 1/1. It participates in cofactor biosynthesis; NAD(+) biosynthesis; quinolinate from L-kynurenine: step 2/3. Catalyzes the cleavage of L-kynurenine (L-Kyn) and L-3-hydroxykynurenine (L-3OHKyn) into anthranilic acid (AA) and 3-hydroxyanthranilic acid (3-OHAA), respectively. In Aspergillus oryzae (strain ATCC 42149 / RIB 40) (Yellow koji mold), this protein is Kynureninase 1 (bna5-1).